The following is a 409-amino-acid chain: Serine/threonine transporter SstT (409 aa).

Transmembrane regions (helical) follow at residues 17–37 (LVVQ…FFPA), 49–69 (FVSA…MASI), 83–103 (ILLL…IASF), 142–162 (ALIS…GIAF), 180–200 (VSLI…GLVA), 218–238 (LVVL…LIVF), 299–319 (MAGA…TLGI), 331–351 (VVAS…LLLI), and 357–377 (LFGI…IIAI).

This sequence belongs to the dicarboxylate/amino acid:cation symporter (DAACS) (TC 2.A.23) family.

The protein resides in the cell inner membrane. It catalyses the reaction L-serine(in) + Na(+)(in) = L-serine(out) + Na(+)(out). The enzyme catalyses L-threonine(in) + Na(+)(in) = L-threonine(out) + Na(+)(out). Its function is as follows. Involved in the import of serine and threonine into the cell, with the concomitant import of sodium (symport system). The chain is Serine/threonine transporter SstT from Pseudomonas paraeruginosa (strain DSM 24068 / PA7) (Pseudomonas aeruginosa (strain PA7)).